The sequence spans 174 residues: Shikimate kinase 2 (174 aa).

12-17 (GAGKTT) is an ATP binding site. Thr16 and Asp32 together coordinate Mg(2+). The substrate site is built by Asp34, Arg58, and Gly79. The segment at 112–126 (MQQPESTQRPSLTGK) is LID domain. Arg120 provides a ligand contact to ATP. Arg139 provides a ligand contact to substrate.

This sequence belongs to the shikimate kinase family. AroL subfamily. Monomer. Mg(2+) serves as cofactor.

It localises to the cytoplasm. It carries out the reaction shikimate + ATP = 3-phosphoshikimate + ADP + H(+). It participates in metabolic intermediate biosynthesis; chorismate biosynthesis; chorismate from D-erythrose 4-phosphate and phosphoenolpyruvate: step 5/7. Its function is as follows. Catalyzes the specific phosphorylation of the 3-hydroxyl group of shikimic acid using ATP as a cosubstrate. The polypeptide is Shikimate kinase 2 (Photorhabdus laumondii subsp. laumondii (strain DSM 15139 / CIP 105565 / TT01) (Photorhabdus luminescens subsp. laumondii)).